The following is a 372-amino-acid chain: Probable NADH-dependent flavin oxidoreductase YqiG (372 aa).

Belongs to the NADH:flavin oxidoreductase/NADH oxidase family.

The chain is Probable NADH-dependent flavin oxidoreductase YqiG (yqiG) from Bacillus subtilis (strain 168).